The following is a 528-amino-acid chain: Protein spinster homolog 1 (528 aa).

The segment at 1 to 38 is disordered; the sequence is MAGSDTAPFLSQADDPDDGPAPGHPGLPGPMGNPKSGE. N-acetylalanine is present on Ala-2. The next 12 helical transmembrane spans lie at 60 to 80, 98 to 118, 126 to 146, 160 to 180, 187 to 207, 218 to 238, 278 to 298, 323 to 343, 357 to 377, 381 to 401, 421 to 441, and 465 to 485; these read LIVV…FTVA, GLIQ…FGYL, YLMC…SFIP, VGVG…DLFV, MLSI…IAGS, WALR…FLVV, LGFT…PAFL, LIFG…GVEI, LVCA…LACA, IVAT…NWAI, FQIV…IGLI, and MLCA…AMFI. Phosphoserine is present on Ser-518.

This sequence belongs to the major facilitator superfamily. Spinster (TC 2.A.1.49) family. As to quaternary structure, interacts with BCL2 and BCL2L1.

It is found in the lysosome membrane. It carries out the reaction a 1-acyl-sn-glycero-3-phosphocholine(out) + H(+)(out) = a 1-acyl-sn-glycero-3-phosphocholine(in) + H(+)(in). It catalyses the reaction 1-hexadecanoyl-sn-glycero-3-phosphocholine(out) + H(+)(out) = 1-hexadecanoyl-sn-glycero-3-phosphocholine(in) + H(+)(in). The enzyme catalyses 1-(9Z-octadecenoyl)-sn-glycero-3-phosphocholine(out) + H(+)(out) = 1-(9Z-octadecenoyl)-sn-glycero-3-phosphocholine(in) + H(+)(in). The catalysed reaction is 1-(5Z,8Z,11Z,14Z-eicosatetraenoyl)-sn-glycero-3-phosphocholine(out) + H(+)(out) = 1-(5Z,8Z,11Z,14Z-eicosatetraenoyl)-sn-glycero-3-phosphocholine(in) + H(+)(in). It carries out the reaction 1-(4Z,7Z,10Z,13Z,16Z,19Z-docosahexaenoyl)-sn-glycero-3-phosphocholine(out) + H(+)(out) = 1-(4Z,7Z,10Z,13Z,16Z,19Z-docosahexaenoyl)-sn-glycero-3-phosphocholine(in) + H(+)(in). It catalyses the reaction a 1-acyl-sn-glycero-3-phosphoethanolamine(out) + H(+)(out) = a 1-acyl-sn-glycero-3-phosphoethanolamine(in) + H(+)(in). The enzyme catalyses 1-(9Z-octadecenoyl)-sn-glycero-3-phosphoethanolamine(out) + H(+)(out) = 1-(9Z-octadecenoyl)-sn-glycero-3-phosphoethanolamine(in) + H(+)(in). The catalysed reaction is 1-acyl-sn-glycero-3-phospho-(1'-sn-glycerol)(out) + H(+)(out) = 1-acyl-sn-glycero-3-phospho-(1'-sn-glycerol)(in) + H(+)(in). It carries out the reaction 1-(9Z-octadecenoyl)-sn-glycero-3-phospho-(1'-sn-glycerol)(out) + H(+)(out) = 1-(9Z-octadecenoyl)-sn-glycero-3-phospho-(1'-sn-glycerol)(in) + H(+)(in). It catalyses the reaction a 1-O-(1Z-alkenyl)-sn-glycero-3-phosphocholine(out) + H(+)(out) = a 1-O-(1Z-alkenyl)-sn-glycero-3-phosphocholine(in) + H(+)(in). The enzyme catalyses 1-(1Z-hexadecenyl)-sn-glycero-3-phosphocholine(out) + H(+)(out) = 1-(1Z-hexadecenyl)-sn-glycero-3-phosphocholine(in) + H(+)(in). The catalysed reaction is a 1-O-(1Z-alkenyl)-sn-glycero-3-phosphoethanolamine(out) + H(+)(out) = a 1-O-(1Z-alkenyl)-sn-glycero-3-phosphoethanolamine(in) + H(+)(in). It carries out the reaction 1-O-(1Z-hexadecenyl)-sn-glycero-3-phosphoethanolamine(out) + H(+)(out) = 1-O-(1Z-hexadecenyl)-sn-glycero-3-phosphoethanolamine(in) + H(+)(in). In terms of biological role, plays a critical role in the phospholipid salvage pathway from lysosomes to the cytosol. Mediates the rate-limiting, proton-dependent, lysosomal efflux of lysophospholipids, which can then be reacylated by acyltransferases in the endoplasmic reticulum to form phospholipids. Selective for zwitterionic headgroups such as lysophosphatidylcholine (LPC) and lysophosphatidylethanolamine (LPE), can also transport lysophosphatidylglycerol (LPG), but not other anionic lysophospholipids, sphingosine, nor sphingomyelin. Transports lysophospholipids with saturated, monounsaturated, and polyunsaturated fatty acids, such as 1-hexadecanoyl-sn-glycero-3-phosphocholine, 1-(9Z-octadecenoyl)-sn-glycero-3-phosphocholine and 1-(4Z,7Z,10Z,13Z,16Z,19Z-docosahexaenoyl)-sn-glycero-3-phosphocholine, respectively. Can also transport lysoplasmalogen (LPC with a fatty alcohol) such as 1-(1Z-hexadecenyl)-sn-glycero-3-phosphocholine. Essential player in lysosomal homeostasis. Crucial for cell survival under conditions of nutrient limitation. May be involved in necrotic or autophagic cell death. The sequence is that of Protein spinster homolog 1 (Spns1) from Rattus norvegicus (Rat).